An 84-amino-acid polypeptide reads, in one-letter code: Small ribosomal subunit protein bS18 (84 aa).

This sequence belongs to the bacterial ribosomal protein bS18 family. Part of the 30S ribosomal subunit. Forms a tight heterodimer with protein bS6.

In terms of biological role, binds as a heterodimer with protein bS6 to the central domain of the 16S rRNA, where it helps stabilize the platform of the 30S subunit. The polypeptide is Small ribosomal subunit protein bS18 (Mycobacterium sp. (strain JLS)).